The sequence spans 181 residues: Oligoribonuclease (181 aa).

Residues Leu8–Leu171 form the Exonuclease domain. The active site involves Tyr129.

It belongs to the oligoribonuclease family.

It is found in the cytoplasm. 3'-to-5' exoribonuclease specific for small oligoribonucleotides. In Vibrio parahaemolyticus serotype O3:K6 (strain RIMD 2210633), this protein is Oligoribonuclease.